The following is a 112-amino-acid chain: uncharacterized protein (112 aa).

Residues 1-11 (MAESVASSESL) are compositionally biased toward polar residues. Residues 1-32 (MAESVASSESLPQMKPEEPESKKSPSREAIPK) form a disordered region. Over residues 15-31 (KPEEPESKKSPSREAIP) the composition is skewed to basic and acidic residues. A helical transmembrane segment spans residues 81 to 101 (VVFIFMIAIMSMLVIGLVVCG).

Its subcellular location is the membrane. This is an uncharacterized protein from Encephalitozoon cuniculi (strain GB-M1) (Microsporidian parasite).